The following is a 172-amino-acid chain: Adenine phosphoribosyltransferase (172 aa).

Belongs to the purine/pyrimidine phosphoribosyltransferase family. As to quaternary structure, homodimer.

The protein localises to the cytoplasm. The enzyme catalyses AMP + diphosphate = 5-phospho-alpha-D-ribose 1-diphosphate + adenine. Its pathway is purine metabolism; AMP biosynthesis via salvage pathway; AMP from adenine: step 1/1. Functionally, catalyzes a salvage reaction resulting in the formation of AMP, that is energically less costly than de novo synthesis. The sequence is that of Adenine phosphoribosyltransferase from Prochlorococcus marinus (strain NATL1A).